Reading from the N-terminus, the 640-residue chain is 1,4-alpha-glucan branching enzyme GlgB (640 aa).

Asp-317 functions as the Nucleophile in the catalytic mechanism. The active-site Proton donor is Glu-370.

This sequence belongs to the glycosyl hydrolase 13 family. GlgB subfamily. As to quaternary structure, monomer.

The catalysed reaction is Transfers a segment of a (1-&gt;4)-alpha-D-glucan chain to a primary hydroxy group in a similar glucan chain.. It functions in the pathway glycan biosynthesis; glycogen biosynthesis. Its function is as follows. Catalyzes the formation of the alpha-1,6-glucosidic linkages in glycogen by scission of a 1,4-alpha-linked oligosaccharide from growing alpha-1,4-glucan chains and the subsequent attachment of the oligosaccharide to the alpha-1,6 position. This chain is 1,4-alpha-glucan branching enzyme GlgB, found in Nitratidesulfovibrio vulgaris (strain DP4) (Desulfovibrio vulgaris).